Reading from the N-terminus, the 57-residue chain is MAKGKKKTSQKWKLYEVKGGKVVRKNKFCPRCGPGVFMANHKDRWSCGRCGYTEWKK.

The Zn(2+) site is built by C29, C32, C47, and C50. The C4-type zinc-finger motif lies at 29 to 50; that stretch reads CPRCGPGVFMANHKDRWSCGRC.

This sequence belongs to the eukaryotic ribosomal protein eS31 family. In terms of assembly, part of the 30S ribosomal subunit. It depends on Zn(2+) as a cofactor.

This chain is Small ribosomal subunit protein eS31, found in Thermococcus kodakarensis (strain ATCC BAA-918 / JCM 12380 / KOD1) (Pyrococcus kodakaraensis (strain KOD1)).